Here is a 424-residue protein sequence, read N- to C-terminus: Mitogen-activated protein kinase 9 (424 aa).

One can recognise a Protein kinase domain in the interval 26–321; sequence YQQLKPIGSG…VDEALRHPYI (296 aa). ATP-binding positions include 32-40 and K55; that span reads IGSGAQGIV. D151 serves as the catalytic Proton acceptor. T183 carries the post-translational modification Phosphothreonine; by MAP2K7. The TXY signature appears at 183–185; the sequence is TPY. Y185 is subject to Phosphotyrosine; by MAP2K4. A disordered region spans residues 368–424; sequence KNGVVKDQPSDAAVSSNATPSQSSSINDISSMSTEQTLASDTDSSLDASTGPLEGCR. The span at 388–417 shows a compositional bias: low complexity; sequence SQSSSINDISSMSTEQTLASDTDSSLDAST.

This sequence belongs to the protein kinase superfamily. CMGC Ser/Thr protein kinase family. MAP kinase subfamily. As to quaternary structure, interacts with MECOM. Interacts with DCLK2. Binds to at least four scaffolding proteins, MAPK8IP1/JIP-1, MAPK8IP2/JIP-2, MAPK8IP3/JIP-3/JSAP1 and SPAG9/MAPK8IP4/JIP-4. These proteins also bind other components of the JNK signaling pathway. Interacts with NFATC4. Interacts with ATF7; the interaction does not phosphorylate ATF7 but acts as a docking site for ATF7-associated partners such as JUN. Interacts with BCL10. Interacts with CTNNB1 and GSK3B. Interacts with MAPKBP1. Interacts with POU5F1; phosphorylates POU5F1 at 'Ser-355'. Found in a complex with SH3RF1, RAC2, MAP3K7/TAK1, MAP2K7/MKK7, MAPK8IP1/JIP1 and MAPK8/JNK1. It depends on Mg(2+) as a cofactor. In terms of processing, dually phosphorylated on Thr-183 and Tyr-185 by MAP2K7 and MAP2K4, which activates the enzyme. Autophosphorylated in vitro.

The protein localises to the cytoplasm. Its subcellular location is the nucleus. The enzyme catalyses L-seryl-[protein] + ATP = O-phospho-L-seryl-[protein] + ADP + H(+). The catalysed reaction is L-threonyl-[protein] + ATP = O-phospho-L-threonyl-[protein] + ADP + H(+). With respect to regulation, activated by threonine and tyrosine phosphorylation by either of two dual specificity kinases, MAP2K4 and MAP2K7. MAP2K4 shows a strong preference for Tyr-185 while MAP2K7 phosphorylates Tyr-183 preferentially. Inhibited by dual specificity phosphatases, such as DUSP1. Its function is as follows. Serine/threonine-protein kinase involved in various processes such as cell proliferation, differentiation, migration, transformation and programmed cell death. Extracellular stimuli such as pro-inflammatory cytokines or physical stress stimulate the stress-activated protein kinase/c-Jun N-terminal kinase (SAP/JNK) signaling pathway. In this cascade, two dual specificity kinases MAP2K4/MKK4 and MAP2K7/MKK7 phosphorylate and activate MAPK9/JNK2. In turn, MAPK9/JNK2 phosphorylates a number of transcription factors, primarily components of AP-1 such as JUN and ATF2 and thus regulates AP-1 transcriptional activity. In response to oxidative or ribotoxic stresses, inhibits rRNA synthesis by phosphorylating and inactivating the RNA polymerase 1-specific transcription initiation factor RRN3. Promotes stressed cell apoptosis by phosphorylating key regulatory factors including TP53 and YAP1. In T-cells, MAPK8 and MAPK9 are required for polarized differentiation of T-helper cells into Th1 cells. Upon T-cell receptor (TCR) stimulation, is activated by CARMA1, BCL10, MAP2K7 and MAP3K7/TAK1 to regulate JUN protein levels. Plays an important role in the osmotic stress-induced epithelial tight-junctions disruption. When activated, promotes beta-catenin/CTNNB1 degradation and inhibits the canonical Wnt signaling pathway. Also participates in neurite growth in spiral ganglion neurons. Phosphorylates the CLOCK-BMAL1 heterodimer and plays a role in the regulation of the circadian clock. Phosphorylates POU5F1, which results in the inhibition of POU5F1's transcriptional activity and enhances its proteasomal degradation. Phosphorylates ALKBH5 in response to reactive oxygen species (ROS), promoting ALKBH5 sumoylation and inactivation. Functionally, MAPK9 isoforms display different binding patterns: alpha-1 and alpha-2 preferentially bind to JUN, whereas beta-1 and beta-2 bind to ATF2. However, there is no correlation between binding and phosphorylation, which is achieved at about the same efficiency by all isoforms. JUNB is not a substrate for JNK2 alpha-2, and JUND binds only weakly to it. This chain is Mitogen-activated protein kinase 9 (MAPK9), found in Homo sapiens (Human).